Here is a 631-residue protein sequence, read N- to C-terminus: Phosphomethylpyrimidine synthase (631 aa).

Substrate is bound by residues Asn231, Met260, Tyr289, His325, Ser345–Gly347, Asp386–Arg389, and Glu425. His429 contributes to the Zn(2+) binding site. Tyr452 contributes to the substrate binding site. His493 is a binding site for Zn(2+). Residues Cys573, Cys576, and Cys581 each contribute to the [4Fe-4S] cluster site.

Belongs to the ThiC family. In terms of assembly, homodimer. It depends on [4Fe-4S] cluster as a cofactor.

It catalyses the reaction 5-amino-1-(5-phospho-beta-D-ribosyl)imidazole + S-adenosyl-L-methionine = 4-amino-2-methyl-5-(phosphooxymethyl)pyrimidine + CO + 5'-deoxyadenosine + formate + L-methionine + 3 H(+). Its pathway is cofactor biosynthesis; thiamine diphosphate biosynthesis. Its function is as follows. Catalyzes the synthesis of the hydroxymethylpyrimidine phosphate (HMP-P) moiety of thiamine from aminoimidazole ribotide (AIR) in a radical S-adenosyl-L-methionine (SAM)-dependent reaction. The polypeptide is Phosphomethylpyrimidine synthase (Acinetobacter baylyi (strain ATCC 33305 / BD413 / ADP1)).